Reading from the N-terminus, the 201-residue chain is Phospholipase A2 inhibitor PIP (201 aa).

Positions 1 to 19 are cleaved as a signal peptide; the sequence is MKSLQTICLLFIFIARGTS. 8 cysteine pairs are disulfide-bonded: C22–C46, C25–C32, C39–C67, C73–C94, C95–C100, C118–C143, C136–C165, and C169–C191. N157 is a glycosylation site (N-linked (GlcNAc...) asparagine).

In terms of assembly, homohexamer. In terms of processing, glycosylated. In terms of tissue distribution, expressed by the liver.

It localises to the secreted. Inhibits the enzymatic activity of phospholipase A2 (PA2). Binds to the major PLA2 toxin of D.russelli siamensis (Daboiatoxin, AC Q7T2R1, and AC Q7T3T5) at 1-2-fold molar excess of inhibitor to toxin. It exhibits broad spectra in neutralizing the toxicity of various snake venoms and toxins and inhibits the formation of edema in mice. May bind to PLA2 through its proline-rich hydrophobic core region. This chain is Phospholipase A2 inhibitor PIP, found in Malayopython reticulatus (Reticulate python).